The chain runs to 254 residues: Alcohol dehydrogenase 2 (254 aa).

Residue 10–33 (FVAGLGGIGFDTSREIVKSGPKNL) participates in NAD(+) binding. Ser138 serves as a coordination point for substrate. The Proton acceptor role is filled by Tyr151.

It belongs to the short-chain dehydrogenases/reductases (SDR) family. Homodimer.

The enzyme catalyses a primary alcohol + NAD(+) = an aldehyde + NADH + H(+). The catalysed reaction is a secondary alcohol + NAD(+) = a ketone + NADH + H(+). This chain is Alcohol dehydrogenase 2 (Adh2), found in Drosophila wheeleri (Fruit fly).